Reading from the N-terminus, the 504-residue chain is Maturase K (504 aa).

This sequence belongs to the intron maturase 2 family. MatK subfamily.

The protein localises to the plastid. It is found in the chloroplast. Functionally, usually encoded in the trnK tRNA gene intron. Probably assists in splicing its own and other chloroplast group II introns. This Lablab purpureus (Hyacinth bean) protein is Maturase K.